The sequence spans 287 residues: MKQYLDLASYVLANGKKRKNRTDTDTLSVFGYQMKFDLTNSFPLLTTKKVNWKAIVHELLWFIKGDTNIKYLVDNGVNIWNEWPYENFKKSPSFQNETLQEFILKVKTDNEFAKQFADLGPVYGKQWRNFNGVDQLKKVIQEIKENPNSRRLIVSSWNPSELEKMALAPCHSLFQFYVEEDKLSLQLYQRSGDIFLGVPFNIASYALLVYLVAHETKLKPGYFIHTLGDAHIYENHIEQIKLQLTRTTLDPPQVVLKSDKSIFAYSFDDIELVGYNYHPFIYGRVAV.

R21 contacts dUMP. N51 contacts (6R)-5,10-methylene-5,6,7,8-tetrahydrofolate. 150-151 contributes to the dUMP binding site; sequence RR. Catalysis depends on C170, which acts as the Nucleophile. DUMP-binding positions include 190 to 193, N201, and 231 to 233; these read RSGD and HIY. Position 193 (D193) interacts with (6R)-5,10-methylene-5,6,7,8-tetrahydrofolate. A286 serves as a coordination point for (6R)-5,10-methylene-5,6,7,8-tetrahydrofolate.

It belongs to the thymidylate synthase family. Bacterial-type ThyA subfamily. In terms of assembly, homodimer.

It localises to the cytoplasm. It carries out the reaction dUMP + (6R)-5,10-methylene-5,6,7,8-tetrahydrofolate = 7,8-dihydrofolate + dTMP. It participates in pyrimidine metabolism; dTTP biosynthesis. Catalyzes the reductive methylation of 2'-deoxyuridine-5'-monophosphate (dUMP) to 2'-deoxythymidine-5'-monophosphate (dTMP) while utilizing 5,10-methylenetetrahydrofolate (mTHF) as the methyl donor and reductant in the reaction, yielding dihydrofolate (DHF) as a by-product. This enzymatic reaction provides an intracellular de novo source of dTMP, an essential precursor for DNA biosynthesis. The polypeptide is Thymidylate synthase (Mycoplasma genitalium (strain ATCC 33530 / DSM 19775 / NCTC 10195 / G37) (Mycoplasmoides genitalium)).